The primary structure comprises 414 residues: Putative competence-damage inducible protein (414 aa).

The protein belongs to the CinA family.

The chain is Putative competence-damage inducible protein from Limosilactobacillus fermentum (strain NBRC 3956 / LMG 18251) (Lactobacillus fermentum).